The chain runs to 480 residues: Zinc finger protein ztf-6 (480 aa).

4 disordered regions span residues 92–160 (CHDS…TMMV), 174–198 (GTNGSSNSNTTSSSKSPQEEEEEHD), 282–307 (LDAGSSENDGSTSSSQPSPPADPTAS), and 328–351 (DANTSSADQKAAARKRKSTPMKVP). Low complexity-rich tracts occupy residues 95–105 (SATSTTTTVSH), 131–145 (SSIESRSIRSVSSSV), 174–187 (GTNGSSNSNTTSSS), and 286–296 (SSENDGSTSSS). 2 consecutive C2H2-type zinc fingers follow at residues 359–383 (YICPMDGCNKVFKEKGSVHRHFVTH) and 388–410 (FNCDKCKASYTQKHALMLHQKIH). A C2H2-type 3; degenerate zinc finger spans residues 416–441 (YQCRGCGTNYTTQNGLRLHRQRNPAC). The segment at 461 to 480 (ALSGPLSKNSSPTKQMVSAP) is disordered.

In terms of biological role, probable transcription factor, involved in regulation of dopamine neuron lineage specification. May play a role in maintaining robustness of the Wnt/beta-catenin asymmetry pathway. This Caenorhabditis elegans protein is Zinc finger protein ztf-6.